We begin with the raw amino-acid sequence, 1337 residues long: Multidrug resistance protein fer6 (1337 aa).

Residues 1-23 (MTPEASANWFSLCWFAWIDPILT) form the signal peptide. N71 carries N-linked (GlcNAc...) asparagine glycosylation. The next 2 membrane-spanning stretches (helical) occupy residues 94-114 (FWIGGLLKLLADVGTITSPLL) and 138-158 (LGSGVGLAIGLFLVQALCVFL). Residues 95-386 (WIGGLLKLLA…LPIAWNAIVD (292 aa)) form the ABC transmembrane type-1 1 domain. A glycan (N-linked (GlcNAc...) asparagine) is linked at N187. 4 helical membrane-spanning segments follow: residues 220–242 (FFHMAWTSAVQIIICVALLIWSL), 247–269 (LPGIAVLVLMSPIQTAITKRLFA), 331–351 (ALAFATPTIATVLSFVTYALV), and 359–379 (ILFSSLSFFTLLRTPLQFLPI). One can recognise an ABC transporter 1 domain in the interval 417-667 (IQLEDASFTW…KGRVAELLLT (251 aa)). The tract at residues 432-460 (ADTAKPVNEKKGQDSPSNEKETPVDRAST) is disordered. Basic and acidic residues predominate over residues 438–455 (VNEKKGQDSPSNEKETPV). Residue N465 is glycosylated (N-linked (GlcNAc...) asparagine). Residue 478 to 485 (GGVGSGKS) participates in ATP binding. The interval 699–751 (GSASNRNSEASESTTTTVNAESKDTSNAEGVTNKTEKKDLVAPPAQAKSKALM) is disordered. Residues 700 to 718 (SASNRNSEASESTTTTVNA) show a composition bias toward low complexity. N731 carries an N-linked (GlcNAc...) asparagine glycan. The next 6 helical transmembrane spans lie at 769 to 789 (YLNAAPLSILLPLFLVAVLVF), 817 to 837 (GIYAVFGITQSLGLLSMGVIF), 890 to 909 (AMRTLIGTIVQVIGSIVLIA), 915 to 933 (FLIPVAVILVLYFWIAAYY), 999 to 1019 (LSVRLDFLGSLLILSVAILVV), and 1028 to 1048 (GETGVALSYILTAQSIFGWMI). One can recognise an ABC transmembrane type-1 2 domain in the interval 781–1056 (LFLVAVLVFQ…MIRHAAELEN (276 aa)). N-linked (GlcNAc...) asparagine glycosylation is present at N1057. The 229-residue stretch at 1097-1325 (IRFEGVEAKY…EKGAFRALCD (229 aa)) folds into the ABC transporter 2 domain. Residue 1131-1138 (GRTGAGKS) participates in ATP binding. An N-linked (GlcNAc...) asparagine glycan is attached at N1227.

Belongs to the ABC transporter superfamily. ABCC family. Conjugate transporter (TC 3.A.1.208) subfamily.

The protein localises to the membrane. Multidrug resistance protein; part of the gene cluster that mediates the biosynthesis of siderophore ferrichrome A which is contributing to organismal virulence. This is Multidrug resistance protein fer6 from Mycosarcoma maydis (Corn smut fungus).